We begin with the raw amino-acid sequence, 151 residues long: Ribosome maturation factor RimP (151 aa).

It belongs to the RimP family.

The protein localises to the cytoplasm. Functionally, required for maturation of 30S ribosomal subunits. This chain is Ribosome maturation factor RimP, found in Vibrio cholerae serotype O1 (strain ATCC 39541 / Classical Ogawa 395 / O395).